We begin with the raw amino-acid sequence, 1939 residues long: Myosin-1 (1939 aa).

The Myosin N-terminal SH3-like domain maps to 33–82; it reads DAKTSVFVVDPKESFVKATVQSREGGKVTAKTEAGATVTVKDDQVFPMNP. Residues Thr64 and Thr69 each carry the phosphothreonine modification. Residues 86-782 enclose the Myosin motor domain; it reads DKIEDMAMMT…LLGLLEEMRD (697 aa). Position 130 is an N6,N6,N6-trimethyllysine (Lys130). 179 to 186 provides a ligand contact to ATP; it reads GESGAGKT. A Phosphotyrosine modification is found at Tyr389. Phosphothreonine is present on Thr419. Tyr424 bears the Phosphotyrosine mark. The tract at residues 659-681 is actin-binding; sequence LNKLMTNLRSTHPHFVRCIIPNE. At His757 the chain carries Pros-methylhistidine. Positions 761-775 are actin-binding; it reads KFGHTKVFFKAGLLG. The region spanning 785–814 is the IQ domain; it reads LAQLITRTQAMCRGFLARVEYQKMVERRES. Residues 843-1939 are a coiled coil; sequence LLKSAETEKE…EVHTKIISEE (1097 aa). Ser1092, Ser1096, Ser1162, and Ser1237 each carry phosphoserine. Thr1241 carries the phosphothreonine modification. 2 positions are modified to phosphoserine: Ser1243 and Ser1261. 2 positions are modified to phosphothreonine: Thr1265 and Thr1286. 4 positions are modified to phosphoserine: Ser1288, Ser1292, Ser1303, and Ser1306. Thr1467 is modified (phosphothreonine). Ser1474 is subject to Phosphoserine. Tyr1492 is subject to Phosphotyrosine. Ser1495 carries the phosphoserine modification. Thr1501 carries the post-translational modification Phosphothreonine. Ser1514 carries the phosphoserine modification. Thr1517 is subject to Phosphothreonine. Phosphoserine is present on residues Ser1542, Ser1554, Ser1574, Ser1600, Ser1603, Ser1714, and Ser1726. Residues Thr1730 and Thr1736 each carry the phosphothreonine modification. Ser1739 bears the Phosphoserine mark.

The protein belongs to the TRAFAC class myosin-kinesin ATPase superfamily. Myosin family. In terms of assembly, muscle myosin is a hexameric protein that consists of 2 heavy chain subunits (MHC), 2 alkali light chain subunits (MLC) and 2 regulatory light chain subunits (MLC-2). Interacts with SLC26A5.

Its subcellular location is the cytoplasm. The protein resides in the myofibril. Its function is as follows. Required for normal hearing. It plays a role in cochlear amplification of auditory stimuli, likely through the positive regulation of prestin (SLC26A5) activity and outer hair cell (OHC) electromotility. The chain is Myosin-1 from Homo sapiens (Human).